The following is a 244-amino-acid chain: Neurogenin-1 (244 aa).

Disordered stretches follow at residues M1 to L27 and L39 to R82. Low complexity predominate over residues S10 to L27. One can recognise a bHLH domain in the interval S93–L145.

Efficient DNA binding requires dimerization with another bHLH protein. In terms of tissue distribution, expression restricted to the embryonic nervous system.

Its subcellular location is the nucleus. Functionally, acts as a transcriptional regulator. Involved in the initiation of neuronal differentiation. Activates transcription by binding to the E box (5'-CANNTG-3'). Associates with chromatin to enhancer regulatory elements in genes encoding key transcriptional regulators of neurogenesis. This is Neurogenin-1 (Neurog1) from Mus musculus (Mouse).